The sequence spans 589 residues: ABC transporter G family member 8 (589 aa).

An ABC transporter domain is found at 16–261 (LTTSSISYTI…LLFKGFTVPP (246 aa)). 62–69 (GPSGAGKS) is an ATP binding site. Positions 311 to 521 (TEISLLARRF…ALDALLINEY (211 aa)) constitute an ABC transmembrane type-2 domain. 7 helical membrane passes run 335 to 355 (ALEA…IGIG), 365 to 385 (MFAF…PIFI), 412 to 432 (VFLP…YFLI), 441 to 461 (FGYF…FVLF), 470 to 490 (ITGT…SGYF), 499 to 519 (YWLF…LLIN), and 560 to 580 (FNVY…FLAL).

It belongs to the ABC transporter superfamily. ABCG family. Eye pigment precursor importer (TC 3.A.1.204) subfamily.

Its subcellular location is the membrane. The sequence is that of ABC transporter G family member 8 (ABCG8) from Arabidopsis thaliana (Mouse-ear cress).